The chain runs to 671 residues: Transcriptional regulator Kaiso (671 aa).

An interaction with NCOR1 region spans residues 1 to 103 (MESRKLISAT…RADLLDELIK (103 aa)). The segment at 1–136 (MESRKLISAT…SGTEQDGTAE (136 aa)) is self-association. The region spanning 32–94 (CDVTVIVEDR…IYSSKVVRVR (63 aa)) is the BTB domain. Residues 127–144 (SGTEQDGTAETLPSSSSD) are compositionally biased toward polar residues. The tract at residues 127–161 (SGTEQDGTAETLPSSSSDKSLDMEKSKDEAQDNGA) is disordered. The span at 145-156 (KSLDMEKSKDEA) shows a compositional bias: basic and acidic residues. Glycyl lysine isopeptide (Lys-Gly) (interchain with G-Cter in SUMO2) cross-links involve residues lysine 151 and lysine 153. Residue threonine 251 is modified to Phosphothreonine. Residues 298–571 (LPNHMSSSVN…FMSSHIKSVH (274 aa)) form an interaction with CBFA2T3 region. The segment at 332 to 365 (IIDDDDDIISSSPDSAVSNTSLVPQADNSKSTTL) is disordered. Polar residues predominate over residues 347–365 (AVSNTSLVPQADNSKSTTL). Glycyl lysine isopeptide (Lys-Gly) (interchain with G-Cter in SUMO2) cross-links involve residues lysine 388, lysine 405, lysine 412, and lysine 447. Basic and acidic residues predominate over residues 451–461 (DGGEAKLDNEL). A disordered region spans residues 451-474 (DGGEAKLDNELPKTSGSEPPNKRM). The segment at 452 to 671 (GGEAKLDNEL…EFEFIIPESY (220 aa)) is interaction with CTNND1. Residues lysine 463, lysine 472, and lysine 477 each participate in a glycyl lysine isopeptide (Lys-Gly) (interchain with G-Cter in SUMO2) cross-link. The Nuclear localization signal signature appears at 469–478 (PPNKRMKVKH). 3 consecutive C2H2-type zinc fingers follow at residues 492–514 (YICI…FNIH), 520–542 (YQCR…EIHH), and 548–571 (YQCL…KSVH). Positions 512–637 (NIHSWEKKYQ…TSTPPQNKST (126 aa)) are required for DNA-binding. Residues lysine 537, lysine 568, lysine 580, lysine 609, and lysine 616 each participate in a glycyl lysine isopeptide (Lys-Gly) (interchain with G-Cter in SUMO2) cross-link.

As to quaternary structure, interacts with NCOR1. Self-associates. Interacts with CTNND1, and this interaction inhibits binding to both methylated and non-methylated DNA. Interacts with CTNND2. Interacts with KPNA2/RCH1, which may mediate nuclear import of this protein. Interacts with CBFA2T3. As to expression, expressed in brain, heart, kidney, liver, lung, neuromuscular junctions, skeletal muscle, spleen and testis.

The protein resides in the nucleus. Its function is as follows. Transcriptional regulator with bimodal DNA-binding specificity. Binds to methylated CpG dinucleotides in the consensus sequence 5'-CGCG-3' and also binds to the non-methylated consensus sequence 5'-CTGCNA-3' also known as the consensus kaiso binding site (KBS). May recruit the N-CoR repressor complex to promote histone deacetylation and the formation of repressive chromatin structures in target gene promoters. Contributes to the repression of target genes of the Wnt signaling pathway. May also activate transcription of a subset of target genes by the recruitment of CTNND2. Represses expression of MMP7 in conjunction with transcriptional corepressors CBFA2T3, CBFA2T2 and RUNX1T1. This Mus musculus (Mouse) protein is Transcriptional regulator Kaiso (Zbtb33).